The sequence spans 481 residues: Protein hedgehog (481 aa).

Residue cysteine 93 is the site of N-palmitoyl cysteine attachment. Residues glutamate 157, glutamate 158, aspartate 163, threonine 193, glutamate 194, aspartate 197, and aspartate 199 each contribute to the Ca(2+) site. Glycine 265 is lipidated: Cholesterol glycine ester.

It belongs to the hedgehog family. Interacts with shf. The C-terminal part of the hedgehog protein precursor displays an autoproteolysis activity that results in the cleavage of the full-length protein into two parts (N-product and C-product). In addition, the C-terminal part displays a cholesterol transferase activity that results by the covalent attachment of a cholesterol moiety to the C-terminal of the newly generated N-product. The N-product is the active species in both local and long-range signaling, whereas the C-product has no signaling activity. Post-translationally, cholesterylation is required for N-product targeting to lipid rafts and multimerization. In terms of processing, N-palmitoylation by Rasp of the hedgehog N-product, within the secretory pathway, is required for the embryonic and larval patterning activities of the hedgehog signal.

It localises to the nucleus. The protein localises to the cytoplasm. The protein resides in the cell membrane. It carries out the reaction glycyl-L-cysteinyl-[protein] + cholesterol + H(+) = [protein]-C-terminal glycyl cholesterol ester + N-terminal L-cysteinyl-[protein]. Functionally, the C-terminal part of the hedgehog protein precursor displays an autoproteolysis activity that results in the cleavage of the full-length protein into two parts (N-product and C-product). In addition, the C-terminal part displays a cholesterol transferase activity that results by the covalent attachment of a cholesterol moiety to the C-terminal of the newly generated N-product. Once cleaved, the C-product has no signaling activity and diffuses from the cell. The dually lipidated hedgehog protein N-product is a morphogen which is essential for a variety of patterning events during development. Establishes the anterior-posterior axis of the embryonic segments and patterns the larval imaginal disks. Binds to the patched (ptc) receptor, which functions in association with smoothened (smo), to activate the transcription of target genes wingless (wg), decapentaplegic (dpp) and ptc. In the absence of hh, ptc represses the constitutive signaling activity of smo through fused (fu). Essential component of a signaling pathway which regulates the Duox-dependent gut immune response to bacterial uracil; required to activate Cad99C-dependent endosome formation, norpA-dependent Ca2+ mobilization and p38 MAPK, which are essential steps in the Duox-dependent production of reactive oxygen species (ROS) in response to intestinal bacterial infection. During photoreceptor differentiation, it up-regulates transcription of Ubr3, which in turn promotes the hh-signaling pathway by mediating the ubiquitination and degradation of cos. The polypeptide is Protein hedgehog (hh-1) (Drosophila pseudoobscura pseudoobscura (Fruit fly)).